Consider the following 308-residue polypeptide: Oligopeptide transport system permease protein AmiD (308 aa).

6 helical membrane-spanning segments follow: residues 43–63, 111–131, 145–167, 171–193, 234–254, and 274–294; these read TVVM…YPMF, ILIS…VGGI, VYNV…SIGA, NLIF…VQIL, MLPS…GLPI, and AYLF…LFVV. The ABC transmembrane type-1 domain maps to 107–295; it reads ARNSILISVI…LVSLSLFVVG (189 aa).

This sequence belongs to the binding-protein-dependent transport system permease family. OppBC subfamily.

The protein resides in the cell membrane. Its function is as follows. Part of the binding-protein-dependent transport system for oligopeptides; probably responsible for the translocation of the substrate across the membrane. The sequence is that of Oligopeptide transport system permease protein AmiD (amiD) from Streptococcus pneumoniae (strain ATCC BAA-255 / R6).